Consider the following 190-residue polypeptide: Shikimate kinase (190 aa).

26-31 is an ATP binding site; it reads GSGKST. Residue S30 participates in Mg(2+) binding. Residues D48, R72, and G94 each coordinate substrate. R133 contacts ATP. R152 contributes to the substrate binding site.

The protein belongs to the shikimate kinase family. As to quaternary structure, monomer. The cofactor is Mg(2+).

Its subcellular location is the cytoplasm. The enzyme catalyses shikimate + ATP = 3-phosphoshikimate + ADP + H(+). It participates in metabolic intermediate biosynthesis; chorismate biosynthesis; chorismate from D-erythrose 4-phosphate and phosphoenolpyruvate: step 5/7. Catalyzes the specific phosphorylation of the 3-hydroxyl group of shikimic acid using ATP as a cosubstrate. The polypeptide is Shikimate kinase (Prochlorococcus marinus (strain SARG / CCMP1375 / SS120)).